The chain runs to 510 residues: Bifunctional purine biosynthesis protein PurH (510 aa).

The 144-residue stretch at 1–144 (MSKRALISVT…KNYKDVIVVV (144 aa)) folds into the MGS-like domain.

It belongs to the PurH family.

It carries out the reaction (6R)-10-formyltetrahydrofolate + 5-amino-1-(5-phospho-beta-D-ribosyl)imidazole-4-carboxamide = 5-formamido-1-(5-phospho-D-ribosyl)imidazole-4-carboxamide + (6S)-5,6,7,8-tetrahydrofolate. The catalysed reaction is IMP + H2O = 5-formamido-1-(5-phospho-D-ribosyl)imidazole-4-carboxamide. The protein operates within purine metabolism; IMP biosynthesis via de novo pathway; 5-formamido-1-(5-phospho-D-ribosyl)imidazole-4-carboxamide from 5-amino-1-(5-phospho-D-ribosyl)imidazole-4-carboxamide (10-formyl THF route): step 1/1. It participates in purine metabolism; IMP biosynthesis via de novo pathway; IMP from 5-formamido-1-(5-phospho-D-ribosyl)imidazole-4-carboxamide: step 1/1. This is Bifunctional purine biosynthesis protein PurH from Clostridioides difficile (strain 630) (Peptoclostridium difficile).